The primary structure comprises 85 residues: V-type proton ATPase subunit f (85 aa).

2 helical membrane passes run 13-33 (CTGL…LFSI) and 56-76 (CLGA…QVIV).

As to quaternary structure, V-ATPase is a heteromultimeric enzyme composed of a peripheral catalytic V1 complex (components A to H) attached to an integral membrane V0 proton pore complex (components: a, c, c', c'', d, e, f and VOA1).

It is found in the endoplasmic reticulum membrane. In terms of biological role, accessory component of the V0 complex of vacuolar(H+)-ATPase (V-ATPase), a multisubunit enzyme composed of a peripheral complex (V1) that hydrolyzes ATP and a membrane integral complex (V0) that translocates protons. V-ATPase is responsible for acidifying and maintaining the pH of intracellular compartments. The polypeptide is V-type proton ATPase subunit f (Schizosaccharomyces pombe (strain 972 / ATCC 24843) (Fission yeast)).